The primary structure comprises 314 residues: tRNA dimethylallyltransferase (314 aa).

13 to 20 is a binding site for ATP; the sequence is GPTAIGKT. Position 15–20 (15–20) interacts with substrate; that stretch reads TAIGKT. The interval 38–41 is interaction with substrate tRNA; it reads DSMQ.

This sequence belongs to the IPP transferase family. In terms of assembly, monomer. Mg(2+) serves as cofactor.

It catalyses the reaction adenosine(37) in tRNA + dimethylallyl diphosphate = N(6)-dimethylallyladenosine(37) in tRNA + diphosphate. In terms of biological role, catalyzes the transfer of a dimethylallyl group onto the adenine at position 37 in tRNAs that read codons beginning with uridine, leading to the formation of N6-(dimethylallyl)adenosine (i(6)A). This chain is tRNA dimethylallyltransferase, found in Desulfotalea psychrophila (strain LSv54 / DSM 12343).